A 775-amino-acid chain; its full sequence is Kinesin-like protein KIF3B (775 aa).

Residues serine 9–isoleucine 341 enclose the Kinesin motor domain. Residue glycine 97–threonine 104 participates in ATP binding. The interval lysine 372–isoleucine 419 is disordered. The span at serine 374–arginine 385 shows a compositional bias: basic residues. Positions glycine 389 to valine 413 are enriched in acidic residues. Residues leucine 501–leucine 591 are a coiled coil. Positions phenylalanine 716–lysine 775 are disordered. The span at alanine 718–serine 734 shows a compositional bias: low complexity. Residues lysine 735–lysine 746 are compositionally biased toward basic residues. A compositionally biased stretch (low complexity) spans serine 756–leucine 765.

Belongs to the TRAFAC class myosin-kinesin ATPase superfamily. Kinesin family. Heterodimer of KIF3A and KIF3B. KIF3A/KIF3B heterodimer interacts with KIFAP3 forming a heterotrimeric (KIF3A/KIF3B/KIFAP3) complex.

The protein resides in the cytoplasm. It is found in the cytoskeleton. Its subcellular location is the cell projection. It localises to the cilium. The protein localises to the dendritic spine. Its function is as follows. Microtubule-based molecular motor that transport intracellular cargos, such as vesicles, organelles and protein complexes. Uses ATP hydrolysis to generate force to bind and move along the microtubule. Plays a role in cilia formation. Required for photoreceptor development. The protein is Kinesin-like protein KIF3B of Danio rerio (Zebrafish).